Reading from the N-terminus, the 594-residue chain is Glutamate decarboxylase 1 (594 aa).

The span at 1–13 (MASSTPSSSATSS) shows a compositional bias: low complexity. The disordered stretch occupies residues 1–23 (MASSTPSSSATSSNAGADPNTTN). Phosphoserine is present on serine 78. 190-192 (QLS) contacts 4-aminobutanoate. Position 405 is an N6-(pyridoxal phosphate)lysine (lysine 405). Arginine 567 contributes to the 4-aminobutanoate binding site.

This sequence belongs to the group II decarboxylase family. As to quaternary structure, homodimer. Pyridoxal 5'-phosphate serves as cofactor.

It catalyses the reaction L-glutamate + H(+) = 4-aminobutanoate + CO2. Its function is as follows. Catalyzes the synthesis of the inhibitory neurotransmitter gamma-aminobutyric acid (GABA) with pyridoxal 5'-phosphate as cofactor. The sequence is that of Glutamate decarboxylase 1 (GAD1) from Pan troglodytes (Chimpanzee).